Consider the following 56-residue polypeptide: uncharacterized protein (56 aa).

This is an uncharacterized protein from Homo sapiens (Human).